Reading from the N-terminus, the 208-residue chain is Small ribosomal subunit protein eS8 (208 aa).

Belongs to the eukaryotic ribosomal protein eS8 family. In terms of assembly, component of the small ribosomal subunit. Identified in a IGF2BP1-dependent mRNP granule complex containing untranslated mRNAs. Part of the small subunit (SSU) processome, composed of more than 70 proteins and the RNA chaperone small nucleolar RNA (snoRNA) U3.

It localises to the cytoplasm. The protein resides in the membrane. It is found in the nucleus. The protein localises to the nucleolus. Its function is as follows. Component of the small ribosomal subunit. The ribosome is a large ribonucleoprotein complex responsible for the synthesis of proteins in the cell. Part of the small subunit (SSU) processome, first precursor of the small eukaryotic ribosomal subunit. During the assembly of the SSU processome in the nucleolus, many ribosome biogenesis factors, an RNA chaperone and ribosomal proteins associate with the nascent pre-rRNA and work in concert to generate RNA folding, modifications, rearrangements and cleavage as well as targeted degradation of pre-ribosomal RNA by the RNA exosome. This Caenorhabditis elegans protein is Small ribosomal subunit protein eS8 (rps-8).